A 241-amino-acid polypeptide reads, in one-letter code: 3-deoxy-D-manno-octulosonic acid kinase (241 aa).

D171 is an active-site residue.

The protein belongs to the protein kinase superfamily. KdkA/RfaP family.

Its subcellular location is the cell inner membrane. It carries out the reaction an alpha-Kdo-(2-&gt;6)-lipid IVA + ATP = a 4-O-phospho-alpha-Kdo-(2-&gt;6)-lipid IVA + ADP + H(+). It functions in the pathway bacterial outer membrane biogenesis; LPS core biosynthesis. Functionally, catalyzes the ATP-dependent phosphorylation of the 3-deoxy-D-manno-octulosonic acid (Kdo) residue in Kdo-lipid IV(A) at the 4-OH position. In Haemophilus influenzae (strain PittEE), this protein is 3-deoxy-D-manno-octulosonic acid kinase.